The sequence spans 144 residues: MYRKMEVSLSKDLRKKYGIRSFPVIMGDVVKVISGSRKGEGGKVAEVDHASGLVVVEGITIARADGKQKGFGIQPEKLQITHLDLSRGDRFDKIKSLAARKNIVVEKPEPEPEPRKEETAEAQEAKEEAVAEEKTEVDDNDKQN.

The disordered stretch occupies residues 102–144; sequence NIVVEKPEPEPEPRKEETAEAQEAKEEAVAEEKTEVDDNDKQN. Residues 103 to 134 show a composition bias toward basic and acidic residues; it reads IVVEKPEPEPEPRKEETAEAQEAKEEAVAEEK. Positions 135–144 are enriched in acidic residues; it reads TEVDDNDKQN.

It belongs to the universal ribosomal protein uL24 family. As to quaternary structure, part of the 50S ribosomal subunit.

Its function is as follows. One of two assembly initiator proteins, it binds directly to the 5'-end of the 23S rRNA, where it nucleates assembly of the 50S subunit. In terms of biological role, located at the polypeptide exit tunnel on the outside of the subunit. The chain is Large ribosomal subunit protein uL24 (rpl24) from Thermoplasma acidophilum (strain ATCC 25905 / DSM 1728 / JCM 9062 / NBRC 15155 / AMRC-C165).